The following is a 346-amino-acid chain: Phenylalanine--tRNA ligase alpha subunit (346 aa).

Residue glutamate 264 participates in Mg(2+) binding.

It belongs to the class-II aminoacyl-tRNA synthetase family. Phe-tRNA synthetase alpha subunit type 1 subfamily. As to quaternary structure, tetramer of two alpha and two beta subunits. Mg(2+) is required as a cofactor.

It is found in the cytoplasm. It catalyses the reaction tRNA(Phe) + L-phenylalanine + ATP = L-phenylalanyl-tRNA(Phe) + AMP + diphosphate + H(+). This Leifsonia xyli subsp. xyli (strain CTCB07) protein is Phenylalanine--tRNA ligase alpha subunit.